The chain runs to 144 residues: NADH dehydrogenase [ubiquinone] 1 alpha subcomplex subunit 13 (144 aa).

Alanine 2 is subject to N-acetylalanine. A helical membrane pass occupies residues 30-51 (LSGYSMLAIGIGTLIYGHWSIM). Residues 102–144 (PDWKVGESVFHTTRWVPPLIGELYGLRTTEEALHASHGFMWYT) form an important for inducing cell death region.

It belongs to the complex I NDUFA13 subunit family. As to quaternary structure, complex I is composed of 45 different subunits. Interacts with CARD15, but not with CARD4. Interacts with STAT3, but not with STAT1, STAT2 and STAT5A. Interacts with OLFM4. (Microbial infection) Interacts with HHV-8 IRF1, in the nucleus, with HPV-16 E6 and SV40 LT. Widely expressed, with highest expression in heart, skeletal muscle, liver, kidney and placenta. In intestinal mucosa, down-regulated in areas involved in Crohn disease and ulcerative colitis.

Its subcellular location is the mitochondrion inner membrane. The protein resides in the nucleus. Accessory subunit of the mitochondrial membrane respiratory chain NADH dehydrogenase (Complex I), that is believed not to be involved in catalysis. Complex I functions in the transfer of electrons from NADH to the respiratory chain. The immediate electron acceptor for the enzyme is believed to be ubiquinone. Involved in the interferon/all-trans-retinoic acid (IFN/RA) induced cell death. This apoptotic activity is inhibited by interaction with viral IRF1. Prevents the transactivation of STAT3 target genes. May play a role in CARD15-mediated innate mucosal responses and serve to regulate intestinal epithelial cell responses to microbes. In Homo sapiens (Human), this protein is NADH dehydrogenase [ubiquinone] 1 alpha subcomplex subunit 13 (NDUFA13).